We begin with the raw amino-acid sequence, 595 residues long: Elongation factor 4 (595 aa).

The region spanning 2 to 184 (KNIRNFSIIA…QIVERIPTPK (183 aa)) is the tr-type G domain. GTP-binding positions include 14-19 (DHGKST) and 131-134 (NKID).

The protein belongs to the TRAFAC class translation factor GTPase superfamily. Classic translation factor GTPase family. LepA subfamily.

The protein localises to the cell inner membrane. It catalyses the reaction GTP + H2O = GDP + phosphate + H(+). Functionally, required for accurate and efficient protein synthesis under certain stress conditions. May act as a fidelity factor of the translation reaction, by catalyzing a one-codon backward translocation of tRNAs on improperly translocated ribosomes. Back-translocation proceeds from a post-translocation (POST) complex to a pre-translocation (PRE) complex, thus giving elongation factor G a second chance to translocate the tRNAs correctly. Binds to ribosomes in a GTP-dependent manner. The polypeptide is Elongation factor 4 (Vesicomyosocius okutanii subsp. Calyptogena okutanii (strain HA)).